The sequence spans 123 residues: Large ribosomal subunit protein uL18 (123 aa).

Belongs to the universal ribosomal protein uL18 family. Part of the 50S ribosomal subunit; part of the 5S rRNA/L5/L18/L25 subcomplex. Contacts the 5S and 23S rRNAs.

In terms of biological role, this is one of the proteins that bind and probably mediate the attachment of the 5S RNA into the large ribosomal subunit, where it forms part of the central protuberance. The sequence is that of Large ribosomal subunit protein uL18 from Wolbachia pipientis wMel.